Reading from the N-terminus, the 679-residue chain is Glycine--tRNA ligase beta subunit (679 aa).

Belongs to the class-II aminoacyl-tRNA synthetase family. Tetramer of two alpha and two beta subunits.

The protein localises to the cytoplasm. The catalysed reaction is tRNA(Gly) + glycine + ATP = glycyl-tRNA(Gly) + AMP + diphosphate. The sequence is that of Glycine--tRNA ligase beta subunit from Streptococcus pyogenes serotype M18 (strain MGAS8232).